A 120-amino-acid chain; its full sequence is MFVLSGYEYLLVFLIVCALLPVLALGASALLAPKRRGSLRRSTYESGMEPFGQAWIQFNIRYYMFALVFVIFDVETVFLYPWAVAFHRLGLLAFVEALIFIAILVVGLVYAWRKGALEWS.

The next 3 helical transmembrane spans lie at 10-30, 64-84, and 89-109; these read LLVF…ASAL, MFAL…PWAV, and LGLL…VGLV.

Belongs to the complex I subunit 3 family. In terms of assembly, NDH-1 can be composed of about 15 different subunits; different subcomplexes with different compositions have been identified which probably have different functions.

The protein resides in the cellular thylakoid membrane. It catalyses the reaction a plastoquinone + NADH + (n+1) H(+)(in) = a plastoquinol + NAD(+) + n H(+)(out). It carries out the reaction a plastoquinone + NADPH + (n+1) H(+)(in) = a plastoquinol + NADP(+) + n H(+)(out). In terms of biological role, NDH-1 shuttles electrons from an unknown electron donor, via FMN and iron-sulfur (Fe-S) centers, to quinones in the respiratory and/or the photosynthetic chain. The immediate electron acceptor for the enzyme in this species is believed to be plastoquinone. Couples the redox reaction to proton translocation, and thus conserves the redox energy in a proton gradient. Cyanobacterial NDH-1 also plays a role in inorganic carbon-concentration. In Synechococcus sp. (strain JA-3-3Ab) (Cyanobacteria bacterium Yellowstone A-Prime), this protein is NAD(P)H-quinone oxidoreductase subunit 3.